A 480-amino-acid chain; its full sequence is MIVADSECRAELKDYLRFAPGGVGDSGPGEEQRESRARRGPRGPSAFIPVEEVLREGAESLEQHLGLEALMSSGRVDNLAVVMGLHPDYFTSFWRLHYLLLHTDGPLASSWRHYIAIMAAARHQCSYLVGSHMAEFLQTGGDPEWLLGLHRAPEKLRKLSEINKLLAHRPWLITKEHIQALLKTGEHTWSLAELIQALVLLTHCHSLSSFVFGCGILPEGDADGSPAPQAPTPPSEQSSPPSRDPLNNSGGFESARDVEALMERMQQLQESLLRDEGTSQEEMESRFELEKSESLLVTPSADILEPSPHPDMLCFVEDPTFGYEDFTRRGAQAPPTFRAQDYTWEDHGYSLIQRLYPEGGQLLDEKFQAAYSLTYNTIAMHSGVDTSVLRRAIWNYIHCVFGIRYDDYDYGEVNQLLERNLKVYIKTVACYPEKTTRRMYNLFWRHFRHSEKVHVNLLLLEARMQAALLYALRAITRYMT.

Methionine 1 bears the N-acetylmethionine mark. A disordered region spans residues 20-45 (PGGVGDSGPGEEQRESRARRGPRGPS). The tract at residues 66 to 239 (GLEALMSSGR…APTPPSEQSS (174 aa)) is N-terminal domain; mediates the alkylhydroperoxide reductase activity. The Cysteine sulfenic acid (-SOH) intermediate role is filled by cysteine 125. Lysine 175 participates in a covalent cross-link: Glycyl lysine isopeptide (Lys-Gly) (interchain with G-Cter in ubiquitin). Disordered stretches follow at residues 222 to 252 (ADGS…SGGF) and 272 to 291 (LLRD…ELEK). Position 249 is a phosphoserine (serine 249). The C-terminal domain; mediates TORC1 regulation stretch occupies residues 308–480 (PHPDMLCFVE…ALRAITRYMT (173 aa)). Residues 374–377 (TYNT), threonine 386, and glutamate 451 each bind L-leucine.

Belongs to the sestrin family. In terms of assembly, interacts with the GATOR2 complex which is composed of MIOS, SEC13, SEH1L, WDR24 and WDR59; the interaction is negatively regulated by leucine. Conveys leucine availability via direct interaction with SEH1L and WDR24 components of the GATOR2 complex. Interacts with RRAGA, RRAGB, RRAGC and RRAGD; may function as a guanine nucleotide dissociation inhibitor for RRAGs and regulate them. May interact with the TORC2 complex. Interacts with KEAP1, RBX1, SQSTM and ULK1; to regulate the degradation of KEAP1. May also associate with the complex composed of TSC1, TSC2 and the AMP-responsive protein kinase/AMPK to regulate TORC1 signaling. May interact with PRDX1. Phosphorylated by ULK1 at multiple sites. In terms of processing, ubiquitinated at Lys-175 by RNF167 via 'Lys-63'-linked polyubiquitination in response to leucine deprivation: ubiquitination promotes SESN2-interaction with the GATOR2 complex, leading to inhibit the TORC1 signaling pathway. Deubiquitinated at Lys-175 by STAMBPL1, promoting the TORC1 signaling pathway. Ubiquitinated by RNF186; ubiquitination mediates proteasomal degradation. Widely expressed.

Its subcellular location is the cytoplasm. It catalyses the reaction a hydroperoxide + L-cysteinyl-[protein] = S-hydroxy-L-cysteinyl-[protein] + an alcohol. Its function is as follows. Functions as an intracellular leucine sensor that negatively regulates the mTORC1 signaling pathway through the GATOR complex. In absence of leucine, binds the GATOR subcomplex GATOR2 and prevents mTORC1 signaling. Binding of leucine to SESN2 disrupts its interaction with GATOR2 thereby activating the TORC1 signaling pathway. This stress-inducible metabolic regulator also plays a role in protection against oxidative and genotoxic stresses. May negatively regulate protein translation in response to endoplasmic reticulum stress, via mTORC1. May positively regulate the transcription by NFE2L2 of genes involved in the response to oxidative stress by facilitating the SQSTM1-mediated autophagic degradation of KEAP1. May also mediate TP53 inhibition of TORC1 signaling upon genotoxic stress. Moreover, may prevent the accumulation of reactive oxygen species (ROS) through the alkylhydroperoxide reductase activity born by the N-terminal domain of the protein. Was originally reported to contribute to oxidative stress resistance by reducing PRDX1. However, this could not be confirmed. The polypeptide is Sestrin-2 (Homo sapiens (Human)).